The primary structure comprises 269 residues: ATP synthase subunit delta (269 aa).

This sequence belongs to the ATPase delta chain family. As to quaternary structure, F-type ATPases have 2 components, F(1) - the catalytic core - and F(0) - the membrane proton channel. F(1) has five subunits: alpha(3), beta(3), gamma(1), delta(1), epsilon(1). F(0) has three main subunits: a(1), b(2) and c(10-14). The alpha and beta chains form an alternating ring which encloses part of the gamma chain. F(1) is attached to F(0) by a central stalk formed by the gamma and epsilon chains, while a peripheral stalk is formed by the delta and b chains.

Its subcellular location is the cell membrane. In terms of biological role, f(1)F(0) ATP synthase produces ATP from ADP in the presence of a proton or sodium gradient. F-type ATPases consist of two structural domains, F(1) containing the extramembraneous catalytic core and F(0) containing the membrane proton channel, linked together by a central stalk and a peripheral stalk. During catalysis, ATP synthesis in the catalytic domain of F(1) is coupled via a rotary mechanism of the central stalk subunits to proton translocation. This protein is part of the stalk that links CF(0) to CF(1). It either transmits conformational changes from CF(0) to CF(1) or is implicated in proton conduction. This Thermobifida fusca (strain YX) protein is ATP synthase subunit delta.